Reading from the N-terminus, the 731-residue chain is Putative pentatricopeptide repeat-containing protein At1g17630 (731 aa).

PPR repeat units lie at residues S88–V118, D122–G156, D157–E191, N192–R222, N223–P257, D258–V292, S293–E327, Y328–K358, G359–C393, N398–A432, N433–E467, N468–K498, D499–P533, D534–P569, and Q570–E600. The segment at V605–K680 is type E motif. Residues K681–L711 are type E(+) motif.

It belongs to the PPR family. PCMP-E subfamily.

This Arabidopsis thaliana (Mouse-ear cress) protein is Putative pentatricopeptide repeat-containing protein At1g17630 (PCMP-E72).